The sequence spans 376 residues: Inactive CLIP domain-containing serine protease A28 (376 aa).

Residues methionine 1–glycine 19 form the signal peptide. A Clip domain is found at glutamate 24–glutamine 80. 3 disulfides stabilise this stretch: cysteine 28–cysteine 78, cysteine 33–cysteine 71, and cysteine 39–cysteine 79. Asparagine 41 carries an N-linked (GlcNAc...) asparagine glycan. The interval proline 85–threonine 106 is disordered. The 251-residue stretch at asparagine 114–valine 364 folds into the Peptidase S1 domain. N-linked (GlcNAc...) asparagine glycosylation is found at asparagine 125 and asparagine 279. 3 cysteine pairs are disulfide-bonded: cysteine 251–cysteine 321, cysteine 280–cysteine 301, and cysteine 311–cysteine 340. N-linked (GlcNAc...) asparagine glycosylation is present at asparagine 369.

The protein belongs to the peptidase S1 family. CLIP subfamily. May form a heterodimer of a light chain and a heavy chain; disulfide-linked. Secreted as a full-length protein. Proteolytically cleaved into two chains which probably remain covalently linked. Cleavage is induced by fungus B.bassiana and Gram-positive or Gram-negative bacteria infection.

It localises to the secreted. In terms of biological role, inactive serine protease which plays an essential role in the innate immune response against bacteria, fungi and protozoa infection by activating the melanization cascade. In the melanization cascade, acts downstream of TEP1, SPCLIP1 and CLIPA8 to promote CLIPC9 proteolytic cleavage. In the susceptible strain G3, appears to be dispensable for parasite P.berghei ookinete elimination which occurs by lysis. Required for the melanization of Gram-positive and Gram-negative bacteria. Required for the melanization of fungus B.bassiana. In Anopheles gambiae (African malaria mosquito), this protein is Inactive CLIP domain-containing serine protease A28.